A 151-amino-acid polypeptide reads, in one-letter code: Ribosome maturation factor RimP (151 aa).

This sequence belongs to the RimP family.

It localises to the cytoplasm. In terms of biological role, required for maturation of 30S ribosomal subunits. This Nitrosococcus oceani (strain ATCC 19707 / BCRC 17464 / JCM 30415 / NCIMB 11848 / C-107) protein is Ribosome maturation factor RimP.